A 183-amino-acid chain; its full sequence is Apo-citrate lyase phosphoribosyl-dephospho-CoA transferase (183 aa).

The protein belongs to the CitX family.

The enzyme catalyses apo-[citrate lyase ACP] + 2'-(5''-triphospho-alpha-D-ribosyl)-3'-dephospho-CoA = holo-[citrate lyase ACP] + diphosphate. In terms of biological role, transfers 2-(5''-triphosphoribosyl)-3'-dephosphocoenzyme-A on a serine residue to the apo-acyl carrier protein (gamma chain) of the citrate lyase to yield holo-acyl carrier protein. The polypeptide is Apo-citrate lyase phosphoribosyl-dephospho-CoA transferase (Escherichia coli O9:H4 (strain HS)).